The chain runs to 532 residues: Phosphoenolpyruvate carboxykinase (ATP) (532 aa).

Substrate-binding residues include Arg60, Tyr195, and Lys201. ATP-binding positions include Lys201, His221, and 237 to 245 (GLSGTGKTT). Residues Lys201 and His221 each coordinate Mn(2+). Asp258 lines the Mn(2+) pocket. Residues Glu287, Arg323, and Thr448 each contribute to the ATP site. Arg323 is a substrate binding site.

This sequence belongs to the phosphoenolpyruvate carboxykinase (ATP) family. It depends on Mn(2+) as a cofactor.

Its subcellular location is the cytoplasm. The enzyme catalyses oxaloacetate + ATP = phosphoenolpyruvate + ADP + CO2. The protein operates within carbohydrate biosynthesis; gluconeogenesis. Involved in the gluconeogenesis. Catalyzes the conversion of oxaloacetate (OAA) to phosphoenolpyruvate (PEP) through direct phosphoryl transfer between the nucleoside triphosphate and OAA. The sequence is that of Phosphoenolpyruvate carboxykinase (ATP) from Christiangramia forsetii (strain DSM 17595 / CGMCC 1.15422 / KT0803) (Gramella forsetii).